Here is a 589-residue protein sequence, read N- to C-terminus: Growth factor receptor-bound protein 10 (589 aa).

Disordered stretches follow at residues 1–51 (MALA…EDDV) and 77–107 (LHNG…VPRS). S99 carries the phosphoserine modification. A Phosphoserine; by MTOR, MAPK1 and MAPK3 modification is found at S145. The region spanning 161–245 (AKQDVKVFSE…SKFLFRKNYA (85 aa)) is the Ras-associating domain. The PH domain maps to 285–394 (CPEIQGFLHV…WMTAFRLLKY (110 aa)). S413 is modified (phosphoserine; by MAPK1 and MAPK3; in vitro). Phosphoserine; by MTOR and PKB/AKT1 is present on S423. The residue at position 426 (S426) is a Phosphoserine. S471 is modified (phosphoserine; by MTOR, MAPK1 and MAPK3). The region spanning 488 to 584 (WFHGRISREE…VLPCKLKHHC (97 aa)) is the SH2 domain.

This sequence belongs to the GRB7/10/14 family. In terms of assembly, interacts with ligand-activated tyrosine kinase receptors, including FGFR1, INSR, IGF1R, MET and PDGFRB in a phosphotyrosine-dependent manner through the SH2 domain. Poorly binds to the EGFR. Directly interacts with MAP3K14/NIK and is recruited to the EGFR-ERBB2 complex. Interacts with GIGYF1/PERQ1 and GIGYF2/TNRC15. When unphosphorylated, interacts with AKT1 and when phosphorylated with YWHAE/14-3-3 epsilon. Interacts with NEDD4. Interacts with LRP6, thus interfering with the binding of AXIN1 to LRP6. Binds relatively non-specifically to several phosphoinositides, including PI(5)P, PI(4,5)P2, PI(3,4)P2 and PI(3,4,5)P3, with modest affinities through the PH domain. Binds to activated NRAS. In terms of processing, phosphorylated on serine residues upon EGF, FGF and PDGF stimulation.

It is found in the cytoplasm. Phosphorylation by mTORC1 stabilizes and activates GRB10 constituting a feedback pathway by which mTORC1 inhibits INSR-dependent signaling. Its function is as follows. Adapter protein which modulates coupling of a number of cell surface receptor kinases with specific signaling pathways. Binds to, and suppress signals from, activated receptors tyrosine kinases, including the insulin (INSR) and insulin-like growth factor (IGF1R) receptors. The inhibitory effect can be achieved by 2 mechanisms: interference with the signaling pathway and increased receptor degradation. Delays and reduces AKT1 phosphorylation in response to insulin stimulation. Blocks association between INSR and IRS1 and IRS2 and prevents insulin-stimulated IRS1 and IRS2 tyrosine phosphorylation. Recruits NEDD4 to IGF1R, leading to IGF1R ubiquitination, increased internalization and degradation by both the proteasomal and lysosomal pathways. A similar role in the mediation of ubiquitination also has been suggested with INSR. Negatively regulates Wnt signaling by interacting with LRP6 intracellular portion and interfering with the binding of AXIN1 to LRP6. Positive regulator of the KDR/VEGFR-2 signaling pathway. May inhibit NEDD4-mediated degradation of KDR/VEGFR-2. This is Growth factor receptor-bound protein 10 (Grb10) from Sus scrofa (Pig).